Here is a 291-residue protein sequence, read N- to C-terminus: MVKKSLRQFTLMATATVTLLLGSVPLYAQTADVQQKLAELERQSGGRLGVALINTADNSQILYRADERFAMCSTSKVMAVAAVLKKSESEPNLLNQRVEIKKSDLVNYNPIAEKHVDGTMSLAELSAAALQYSDNVAMNKLISHVGGPASVTAFARQLGDETFRLDRTEPTLNTAIPGDPRDTTSPRAMAQTLRNLTLGKALGDSQRAQLVTWMKGNTTGAASIQAGLPASWVVGDKTGSGDYGTTNDIAVIWPKDRAPLILVTYFTQPQPKAESRRDVLASAAKIVTNGL.

The N-terminal stretch at 1–28 (MVKKSLRQFTLMATATVTLLLGSVPLYA) is a signal peptide. The active-site Nucleophile; acyl-ester intermediate is the S73. A beta-lactam-binding residues include K76, S133, E169, and S240. The active-site Proton acceptor is E169.

It belongs to the class-A beta-lactamase family. Monomer.

The protein localises to the secreted. It catalyses the reaction a beta-lactam + H2O = a substituted beta-amino acid. Its activity is regulated as follows. Inhibited by the beta-lactamase-blocking agent clavulanic acid; in the TG1 strain. In terms of biological role, extended-spectrum beta-lactamase (ESBL) which confers resistance to penicillins, as well as first, second and third-generation cephalosporins. Has cefotaxime-hydrolyzing activity. Inactive against the cephamycin antibiotic, cefoxitin, or against the carbapenem, imipenem. The chain is Beta-lactamase CTX-M-1 from Escherichia coli.